The following is a 401-amino-acid chain: Chalcone synthase 3 (401 aa).

C168 is a catalytic residue.

It belongs to the thiolase-like superfamily. Chalcone/stilbene synthases family.

It carries out the reaction (E)-4-coumaroyl-CoA + 3 malonyl-CoA + 3 H(+) = 2',4,4',6'-tetrahydroxychalcone + 3 CO2 + 4 CoA. It functions in the pathway secondary metabolite biosynthesis; flavonoid biosynthesis. The primary product of this enzyme is 4,2',4',6'-tetrahydroxychalcone (also termed naringenin-chalcone or chalcone) which can under specific conditions spontaneously isomerize into naringenin. The chain is Chalcone synthase 3 (CHS3) from Sorghum bicolor (Sorghum).